The chain runs to 63 residues: Large ribosomal subunit protein uL30 (63 aa).

Belongs to the universal ribosomal protein uL30 family. In terms of assembly, part of the 50S ribosomal subunit.

This Rickettsia peacockii (strain Rustic) protein is Large ribosomal subunit protein uL30.